The following is a 90-amino-acid chain: Small ribosomal subunit protein uS15c (90 aa).

Belongs to the universal ribosomal protein uS15 family. Part of the 30S ribosomal subunit.

The protein resides in the plastid. The protein localises to the chloroplast. The chain is Small ribosomal subunit protein uS15c (rps15) from Manihot esculenta (Cassava).